The primary structure comprises 312 residues: Glyoxylate/hydroxypyruvate reductase A (312 aa).

R227 is an active-site residue. Residue H275 is the Proton donor of the active site.

This sequence belongs to the D-isomer specific 2-hydroxyacid dehydrogenase family. GhrA subfamily.

Its subcellular location is the cytoplasm. It catalyses the reaction glycolate + NADP(+) = glyoxylate + NADPH + H(+). The catalysed reaction is (R)-glycerate + NAD(+) = 3-hydroxypyruvate + NADH + H(+). The enzyme catalyses (R)-glycerate + NADP(+) = 3-hydroxypyruvate + NADPH + H(+). Catalyzes the NADPH-dependent reduction of glyoxylate and hydroxypyruvate into glycolate and glycerate, respectively. This is Glyoxylate/hydroxypyruvate reductase A from Salmonella agona (strain SL483).